A 143-amino-acid chain; its full sequence is Transcriptional regulatory protein RosR (143 aa).

The segment at 79 to 97 (CLECGGNFKSLKRHLMTHH) adopts a C2H3-type zinc-finger fold.

This sequence belongs to the ros/MucR family.

The protein is Transcriptional regulatory protein RosR (rosR) of Rhizobium etli (strain ATCC 51251 / DSM 11541 / JCM 21823 / NBRC 15573 / CFN 42).